Here is a 189-residue protein sequence, read N- to C-terminus: Prostaglandin-H2 D-isomerase (189 aa).

An N-terminal signal peptide occupies residues 1–24 (MATPSSLWLGLALLGTLGVLQTPA). Gln-25 carries the post-translational modification Pyrrolidone carboxylic acid. N-linked (GlcNAc...) asparagine glycosylation is present at Asn-49. Cys-63 acts as the Nucleophile in catalysis. Asn-76 is a glycosylation site (N-linked (GlcNAc...) asparagine). Cysteines 87 and 184 form a disulfide.

This sequence belongs to the calycin superfamily. Lipocalin family. In terms of assembly, monomer. Abundant in the brain and CNS, where it is expressed in tissues of the blood-brain barrier and secreted into the cerebro-spinal fluid.

It localises to the rough endoplasmic reticulum. The protein localises to the nucleus membrane. It is found in the golgi apparatus. Its subcellular location is the cytoplasm. The protein resides in the perinuclear region. It localises to the secreted. It catalyses the reaction prostaglandin H2 = prostaglandin D2. Catalyzes the conversion of PGH2 to PGD2, a prostaglandin involved in smooth muscle contraction/relaxation and a potent inhibitor of platelet aggregation. Involved in a variety of CNS functions, such as sedation, NREM sleep and PGE2-induced allodynia, and may have an anti-apoptotic role in oligodendrocytes. Binds small non-substrate lipophilic molecules, including biliverdin, bilirubin, retinal, retinoic acid and thyroid hormone, and may act as a scavenger for harmful hydrophobic molecules and as a secretory retinoid and thyroid hormone transporter. Possibly involved in development and maintenance of the blood-brain, blood-retina, blood-aqueous humor and blood-testis barrier. It is likely to play important roles in both maturation and maintenance of the central nervous system and male reproductive system. Involved in PLA2G3-dependent maturation of mast cells. PLA2G3 is secreted by immature mast cells and acts on nearby fibroblasts upstream to PTDGS to synthesize PGD2, which in turn promotes mast cell maturation and degranulation via PTGDR. The protein is Prostaglandin-H2 D-isomerase (PTGDS) of Sus scrofa (Pig).